A 589-amino-acid chain; its full sequence is MTISIDRPAPVSSWRTYRRLLAFAKPYRLLLVAALIAALIEAAGTTGFLALMKPITDETFIYKNAEVSRWLPVQIILLFVVRGVAGYITDMAMGKSARSIARDLRIKVMAKYLRLPGSRFDSEPVPSMLIRLGSDSDQVAQAAVDAVKVMIQQSLQVIGALALMLWHSWQVTLTILVLAPVLAWVMDKVARRYRRISHSIQESGAQLLQAADQTLSSHQEVKIYGAQQTEMERYGALANRNLRLAMKVESTRGISTATVQMIGAIGLSALLFVAGAQALAGRLTAGDFVVLMTSMLTIIPGLKQLTNVQNMVQRGLASAERLFSVLDSPDEPDQGTVPLTRAKGLIEFRDVTARYPGQVNPALADVSFVAQPGTVTAIVGRSGSGKSSLIKLIPRFYEAEAGQILLDGHPVQAYALADLRRQIALVGQQVMLFDGSIADNVAFGEMRNADAGKLERAILGANAMEFVAQLPEGLQSHVGTKGGRLSGGQRQRLAIARAMLKDAPVLILDEATAALDNESERLVQDALHKLMPDRTTLVIAHRLSTIEHADQVLVMDQGRIVERGTHHQLLAQGGLYSHLHGMQFRERQA.

Transmembrane regions (helical) follow at residues 29–49 (LLLV…TGFL), 70–90 (WLPV…YITD), 157–177 (VIGA…TILV), 261–281 (MIGA…ALAG), and 283–303 (LTAG…PGLK). The ABC transmembrane type-1 domain occupies 32–314 (VAALIAALIE…LTNVQNMVQR (283 aa)). The ABC transporter domain maps to 346–582 (IEFRDVTARY…GGLYSHLHGM (237 aa)). 380 to 387 (GRSGSGKS) contributes to the ATP binding site.

The protein belongs to the ABC transporter superfamily. Lipid exporter (TC 3.A.1.106) family. As to quaternary structure, homodimer.

It is found in the cell inner membrane. It carries out the reaction ATP + H2O + lipid A-core oligosaccharideSide 1 = ADP + phosphate + lipid A-core oligosaccharideSide 2.. Functionally, involved in lipopolysaccharide (LPS) biosynthesis. Translocates lipid A-core from the inner to the outer leaflet of the inner membrane. Transmembrane domains (TMD) form a pore in the inner membrane and the ATP-binding domain (NBD) is responsible for energy generation. In Xanthomonas axonopodis pv. citri (strain 306), this protein is ATP-dependent lipid A-core flippase.